A 743-amino-acid chain; its full sequence is Threonine synthase-like 1 (743 aa).

The residue at position 281 (lysine 281) is an N6-acetyllysine. Lysine 351 is modified (N6-(pyridoxal phosphate)lysine).

This sequence belongs to the threonine synthase family. The cofactor is pyridoxal 5'-phosphate.

This is Threonine synthase-like 1 (THNSL1) from Pongo abelii (Sumatran orangutan).